We begin with the raw amino-acid sequence, 177 residues long: Chorismate pyruvate-lyase (177 aa).

Substrate-binding residues include M36, R78, L116, and E157.

This sequence belongs to the UbiC family. As to quaternary structure, monomer.

It localises to the cytoplasm. The catalysed reaction is chorismate = 4-hydroxybenzoate + pyruvate. It functions in the pathway cofactor biosynthesis; ubiquinone biosynthesis. Its function is as follows. Removes the pyruvyl group from chorismate, with concomitant aromatization of the ring, to provide 4-hydroxybenzoate (4HB) for the ubiquinone pathway. In Pectobacterium atrosepticum (strain SCRI 1043 / ATCC BAA-672) (Erwinia carotovora subsp. atroseptica), this protein is Chorismate pyruvate-lyase.